Here is a 956-residue protein sequence, read N- to C-terminus: MGEKPEVLDAVLKETVDLENIPIEEVFENLRCTKEGLTATAAQERLSIFGYNKLEEKKESKFSKFLGFMWNPLSWVMEAAAIMAIALANGGGKPPDWQDFVGIITLLIINSTISFIEENNAGNAAAALMARLAPKAKVLRDGKWKEEDAAVLVPGDIISIKLGDIIPADARLLEGDPLKIDQSALTGESLPVTKGPGDGVYSGSTCKQGEIEAVVIATGVHTFFGKAAHLVDSTNQVGHFQKVLTAIGNFCICSIAVGMIIEIIVMYPIQHRKYRPGIDNLLVLLIGGIPIAMPTVLSVTMAIGSHRLAQQGAITKRMTAIEEMAGMDVLCSDKTGTLTLNKLTVDKYLIEVFARGVDADTVVLMAARASRTENQDAIDAAIVGMLADPKEARAGIREIHFLPFNPTDKRTALTYLDGEGKMHRVSKGAPEQILHLAHNKSDIERRVHAVIDKFAERGLRSLAVAYQEVPEGRKESAGGPWQFIALLPLFDPPRHDSAETIRRALNLGVNVKMITGDQLAIGKETGRRLGMGTNMYPSSALLGQTKDESISALPVDELIEKADGFAGVFPEHKYEIVKRLQARKHICGMTGDGVNDAPALKKADIGIAVDDATDAARSASDIVLTEPGLSVIISAVLTSRAIFQRMKNYTIYAVSITIRIVLGFMLLALIWQFDFPPFMVLIIAILNDGTIMTISKDRVKPSPLPDSWKLAEIFTTGVVLGGYLAMMTVIFFWAAYKTNFFPRVFGVSTLEKTATDDFRKLASAIYLQVSTISQALIFVTRSRSWSFMERPGLLLVVAFFIAQLVATLIAVYANWSFAAIEGIGWGWAGVIWLYNIVFYIPLDLXXFLIRYALSGKAWDLVIEQRIAFTRKKDFGKEQRELQWAHAQRTLHGLQVPDPKIFSETTNFNELNQLAEEAKRRAEIARLRELHTLKGHVESVVKLKGLDIETIQQAYTV.

The Cytoplasmic portion of the chain corresponds to 1 to 65 (MGEKPEVLDA…EKKESKFSKF (65 aa)). A helical membrane pass occupies residues 66-85 (LGFMWNPLSWVMEAAAIMAI). The Extracellular segment spans residues 86–97 (ALANGGGKPPDW). A helical membrane pass occupies residues 98–118 (QDFVGIITLLIINSTISFIEE). Residues 119–247 (NNAGNAAAAL…GHFQKVLTAI (129 aa)) lie on the Cytoplasmic side of the membrane. The helical transmembrane segment at 248 to 268 (GNFCICSIAVGMIIEIIVMYP) threads the bilayer. Over 269-278 (IQHRKYRPGI) the chain is Extracellular. The chain crosses the membrane as a helical span at residues 279–300 (DNLLVLLIGGIPIAMPTVLSVT). Over 301-647 (MAIGSHRLAQ…TSRAIFQRMK (347 aa)) the chain is Cytoplasmic. The active-site 4-aspartylphosphate intermediate is D333. Mg(2+) contacts are provided by D592 and D596. The helical transmembrane segment at 648 to 669 (NYTIYAVSITIRIVLGFMLLAL) threads the bilayer. The Extracellular segment spans residues 670–674 (IWQFD). The helical transmembrane segment at 675 to 697 (FPPFMVLIIAILNDGTIMTISKD) threads the bilayer. The Cytoplasmic segment spans residues 698–713 (RVKPSPLPDSWKLAEI). Residues 714 to 734 (FTTGVVLGGYLAMMTVIFFWA) traverse the membrane as a helical segment. Residues 735-759 (AYKTNFFPRVFGVSTLEKTATDDFR) lie on the Extracellular side of the membrane. The helical transmembrane segment at 760-780 (KLASAIYLQVSTISQALIFVT) threads the bilayer. Residues 781 to 792 (RSRSWSFMERPG) are Cytoplasmic-facing. The chain crosses the membrane as a helical span at residues 793 to 813 (LLLVVAFFIAQLVATLIAVYA). At 814-822 (NWSFAAIEG) the chain is on the extracellular side. A helical membrane pass occupies residues 823-843 (IGWGWAGVIWLYNIVFYIPLD). Topologically, residues 844 to 956 (LXXFLIRYAL…IETIQQAYTV (113 aa)) are cytoplasmic.

The protein belongs to the cation transport ATPase (P-type) (TC 3.A.3) family. Type IIIA subfamily. Expressed in roots, stems, leaves from both vegetative and flowering plants, and flowers at early and late stages of development with highest expression levels found in flowers and root tissue.

The protein resides in the cell membrane. It carries out the reaction ATP + H2O + H(+)(in) = ADP + phosphate + 2 H(+)(out). Functionally, the plasma membrane ATPase of plants and fungi is a hydrogen ion pump. The proton gradient it generates drives the active transport of nutrients by H(+)-symport. The resulting external acidification and/or internal alkinization may mediate growth responses. The chain is Plasma membrane ATPase 3 (PMA3) from Nicotiana plumbaginifolia (Leadwort-leaved tobacco).